A 229-amino-acid chain; its full sequence is Guanylate kinase (229 aa).

Residues 7-42 form the RPE1 insert domain; the sequence is RVLQKCAYREEFKGDMERSTAATSKLPLEVELSRNS. A Guanylate kinase-like domain is found at 44–222; sequence GLIIILSSPS…TLKKIHAIIV (179 aa). 51–58 is a binding site for ATP; sequence SPSGTGKS.

It belongs to the guanylate kinase family.

Its subcellular location is the cytoplasm. It catalyses the reaction GMP + ATP = GDP + ADP. Functionally, essential for recycling GMP and indirectly, cGMP. The protein is Guanylate kinase (gmk) of Rickettsia conorii (strain ATCC VR-613 / Malish 7).